The following is a 264-amino-acid chain: tRNA pseudouridine synthase A (264 aa).

Asp51 functions as the Nucleophile in the catalytic mechanism. Tyr109 is a substrate binding site.

This sequence belongs to the tRNA pseudouridine synthase TruA family. In terms of assembly, homodimer.

It carries out the reaction uridine(38/39/40) in tRNA = pseudouridine(38/39/40) in tRNA. Functionally, formation of pseudouridine at positions 38, 39 and 40 in the anticodon stem and loop of transfer RNAs. The polypeptide is tRNA pseudouridine synthase A (Photorhabdus laumondii subsp. laumondii (strain DSM 15139 / CIP 105565 / TT01) (Photorhabdus luminescens subsp. laumondii)).